Reading from the N-terminus, the 353-residue chain is Phosphoribosylformylglycinamidine cyclo-ligase (353 aa).

This sequence belongs to the AIR synthase family.

It localises to the cytoplasm. It carries out the reaction 2-formamido-N(1)-(5-O-phospho-beta-D-ribosyl)acetamidine + ATP = 5-amino-1-(5-phospho-beta-D-ribosyl)imidazole + ADP + phosphate + H(+). Its pathway is purine metabolism; IMP biosynthesis via de novo pathway; 5-amino-1-(5-phospho-D-ribosyl)imidazole from N(2)-formyl-N(1)-(5-phospho-D-ribosyl)glycinamide: step 2/2. This Symbiobacterium thermophilum (strain DSM 24528 / JCM 14929 / IAM 14863 / T) protein is Phosphoribosylformylglycinamidine cyclo-ligase.